The following is a 238-amino-acid chain: Protein lifeguard 4 (238 aa).

Over 1-38 (MADTDPGYPRSSIEDDFNYGSCVASASVHIRMAFLRKV) the chain is Cytoplasmic. Residues 39–59 (YSILSLQVLLTTVTSALFLYF) form a helical membrane-spanning segment. The Lumenal segment spans residues 60 to 68 (QALRTFVHE). The helical transmembrane segment at 69-89 (SPALIVVFALGSLGLIFALTL) threads the bilayer. Residues 90–97 (HRHTHPLN) lie on the Cytoplasmic side of the membrane. The helical transmembrane segment at 98 to 118 (LYLLFAFTLSESLAVAAVVTF) threads the bilayer. The Lumenal portion of the chain corresponds to 119–120 (YD). The chain crosses the membrane as a helical span at residues 121–141 (VYLVLQAFIMTTAVFLGLTAY). Residues 142–151 (TLQSKRDFTK) lie on the Cytoplasmic side of the membrane. A helical membrane pass occupies residues 152-172 (FGAGLFAGLWILCLAGFLKLF). Residues 173 to 175 (FYS) are Lumenal-facing. Residues 176 to 196 (ETMELVLASLGALLFCGFIIY) traverse the membrane as a helical segment. The Cytoplasmic portion of the chain corresponds to 197–208 (DTHSLMHRLSPE). An intramembrane region (helical) is located at residues 209-229 (EYVIAAISLYMDIINLFLHLL). Residues 230-238 (KFLEAVNKK) lie on the Cytoplasmic side of the membrane.

It belongs to the BI1 family. LFG subfamily. Interacts with ITPR3.

It localises to the golgi apparatus membrane. Anti-apoptotic protein which can inhibit apoptosis induced by intrinsic and extrinsic apoptotic stimuli. Can modulate both capacitative Ca2+ entry and inositol 1,4,5-trisphosphate (IP3)-mediated Ca2+ release. This Mus musculus (Mouse) protein is Protein lifeguard 4 (Tmbim4).